The chain runs to 99 residues: UPF0751 protein BAMEG_A0107 (99 aa).

This sequence belongs to the UPF0751 family.

The sequence is that of UPF0751 protein BAMEG_A0107 from Bacillus anthracis (strain CDC 684 / NRRL 3495).